Consider the following 116-residue polypeptide: Large ribosomal subunit protein bL19 (116 aa).

It belongs to the bacterial ribosomal protein bL19 family.

This protein is located at the 30S-50S ribosomal subunit interface and may play a role in the structure and function of the aminoacyl-tRNA binding site. This is Large ribosomal subunit protein bL19 from Azotobacter vinelandii (strain DJ / ATCC BAA-1303).